A 731-amino-acid polypeptide reads, in one-letter code: Polyadenylate-binding protein, cytoplasmic and nuclear (731 aa).

Residues 1-10 (MSADVSTTPA) are compositionally biased toward polar residues. The tract at residues 1-51 (MSADVSTTPAAENVNGAAEASPAPAAAAPSATTPEVTAVENSTPAPAANQP) is disordered. A compositionally biased stretch (low complexity) spans 17–39 (AAEASPAPAAAAPSATTPEVTAV). 4 consecutive RRM domains span residues 54 to 132 (ASLY…WSQR), 142 to 219 (GNVF…HHIS), 235 to 312 (TNVY…RAQK), and 338 to 472 (VNLY…LAQR). 2 disordered regions span residues 369 to 429 (VMRD…SDKK) and 603 to 665 (GGRG…NAQT). The segment covering 616–627 (GMRGGPGYGQGR) has biased composition (gly residues). Low complexity predominate over residues 645 to 656 (QNAAAPAGPQEG). The 74-residue stretch at 658-731 (AGGVNAQTLG…MRPLAFTMST (74 aa)) folds into the PABC domain.

Belongs to the polyadenylate-binding protein type-1 family.

Its subcellular location is the cytoplasm. It localises to the nucleus. Its function is as follows. Binds the poly(A) tail of mRNA. Appears to be an important mediator of the multiple roles of the poly(A) tail in mRNA biogenesis, stability and translation. In the nucleus, involved in both mRNA cleavage and polyadenylation. Is also required for efficient mRNA export to the cytoplasm. Acts in concert with a poly(A)-specific nuclease (PAN) to affect poly(A) tail shortening, which may occur concomitantly with either nucleocytoplasmic mRNA transport or translational initiation. In the cytoplasm, stimulates translation initiation and regulates mRNA decay through translation termination-coupled poly(A) shortening, probably mediated by PAN. The chain is Polyadenylate-binding protein, cytoplasmic and nuclear (pab1) from Aspergillus niger (strain ATCC MYA-4892 / CBS 513.88 / FGSC A1513).